We begin with the raw amino-acid sequence, 211 residues long: Protein-L-isoaspartate O-methyltransferase (211 aa).

Residue serine 62 is part of the active site.

The protein belongs to the methyltransferase superfamily. L-isoaspartyl/D-aspartyl protein methyltransferase family.

The protein resides in the cytoplasm. It carries out the reaction [protein]-L-isoaspartate + S-adenosyl-L-methionine = [protein]-L-isoaspartate alpha-methyl ester + S-adenosyl-L-homocysteine. Catalyzes the methyl esterification of L-isoaspartyl residues in peptides and proteins that result from spontaneous decomposition of normal L-aspartyl and L-asparaginyl residues. It plays a role in the repair and/or degradation of damaged proteins. The protein is Protein-L-isoaspartate O-methyltransferase of Shewanella sp. (strain MR-4).